We begin with the raw amino-acid sequence, 381 residues long: Dihydroorotate dehydrogenase (quinone) (381 aa).

FMN is bound by residues 74 to 78 and T98; that span reads AGFDK. K78 contributes to the substrate binding site. 123–127 is a substrate binding site; it reads NRMGF. FMN contacts are provided by N152 and N185. N185 serves as a coordination point for substrate. Residue S188 is the Nucleophile of the active site. N190 contacts substrate. FMN is bound by residues K223 and T251. Substrate is bound at residue 252–253; sequence NT. Residues G289, G318, and 339-340 contribute to the FMN site; that span reads YT. Positions 359–381 are disordered; it reads RSSPPSPDVTLPPENTPVGQIQA.

This sequence belongs to the dihydroorotate dehydrogenase family. Type 2 subfamily. Monomer. Requires FMN as cofactor.

The protein resides in the cell membrane. It catalyses the reaction (S)-dihydroorotate + a quinone = orotate + a quinol. It participates in pyrimidine metabolism; UMP biosynthesis via de novo pathway; orotate from (S)-dihydroorotate (quinone route): step 1/1. Its function is as follows. Catalyzes the conversion of dihydroorotate to orotate with quinone as electron acceptor. This Synechococcus sp. (strain JA-2-3B'a(2-13)) (Cyanobacteria bacterium Yellowstone B-Prime) protein is Dihydroorotate dehydrogenase (quinone).